Reading from the N-terminus, the 38-residue chain is Photosystem II reaction center protein L (38 aa).

A helical transmembrane segment spans residues 17–37; the sequence is SLYWGLLLIFVLAVLFSNYFF.

This sequence belongs to the PsbL family. In terms of assembly, PSII is composed of 1 copy each of membrane proteins PsbA, PsbB, PsbC, PsbD, PsbE, PsbF, PsbH, PsbI, PsbJ, PsbK, PsbL, PsbM, PsbT, PsbX, PsbY, PsbZ, Psb30/Ycf12, at least 3 peripheral proteins of the oxygen-evolving complex and a large number of cofactors. It forms dimeric complexes.

The protein resides in the plastid. It is found in the chloroplast thylakoid membrane. Functionally, one of the components of the core complex of photosystem II (PSII). PSII is a light-driven water:plastoquinone oxidoreductase that uses light energy to abstract electrons from H(2)O, generating O(2) and a proton gradient subsequently used for ATP formation. It consists of a core antenna complex that captures photons, and an electron transfer chain that converts photonic excitation into a charge separation. This subunit is found at the monomer-monomer interface and is required for correct PSII assembly and/or dimerization. In Oenothera argillicola (Appalachian evening primrose), this protein is Photosystem II reaction center protein L.